The following is a 539-amino-acid chain: Glucose-6-phosphate isomerase (539 aa).

The active-site Proton donor is Glu349. Active-site residues include His380 and Lys508. A disordered region spans residues Glu519 to Arg539.

Belongs to the GPI family.

The protein localises to the cytoplasm. The enzyme catalyses alpha-D-glucose 6-phosphate = beta-D-fructose 6-phosphate. It functions in the pathway carbohydrate biosynthesis; gluconeogenesis. It participates in carbohydrate degradation; glycolysis; D-glyceraldehyde 3-phosphate and glycerone phosphate from D-glucose: step 2/4. Catalyzes the reversible isomerization of glucose-6-phosphate to fructose-6-phosphate. This is Glucose-6-phosphate isomerase from Caulobacter vibrioides (strain ATCC 19089 / CIP 103742 / CB 15) (Caulobacter crescentus).